The following is a 252-amino-acid chain: Triosephosphate isomerase (252 aa).

Substrate is bound at residue 10-12 (NWK). H96 serves as the catalytic Electrophile. Residue E168 is the Proton acceptor of the active site. Residues G174, S213, and 234-235 (GG) contribute to the substrate site.

The protein belongs to the triosephosphate isomerase family. In terms of assembly, homodimer.

It localises to the cytoplasm. The enzyme catalyses D-glyceraldehyde 3-phosphate = dihydroxyacetone phosphate. The protein operates within carbohydrate biosynthesis; gluconeogenesis. It participates in carbohydrate degradation; glycolysis; D-glyceraldehyde 3-phosphate from glycerone phosphate: step 1/1. Involved in the gluconeogenesis. Catalyzes stereospecifically the conversion of dihydroxyacetone phosphate (DHAP) to D-glyceraldehyde-3-phosphate (G3P). This is Triosephosphate isomerase from Nitrosomonas europaea (strain ATCC 19718 / CIP 103999 / KCTC 2705 / NBRC 14298).